Consider the following 221-residue polypeptide: Probable septum site-determining protein MinC (221 aa).

The protein belongs to the MinC family. In terms of assembly, interacts with MinD and FtsZ.

Functionally, cell division inhibitor that blocks the formation of polar Z ring septums. Rapidly oscillates between the poles of the cell to destabilize FtsZ filaments that have formed before they mature into polar Z rings. Prevents FtsZ polymerization. This Shewanella denitrificans (strain OS217 / ATCC BAA-1090 / DSM 15013) protein is Probable septum site-determining protein MinC.